Consider the following 217-residue polypeptide: UPF0193 protein EVG1 (217 aa).

It belongs to the UPF0193 (EVG1) family.

The polypeptide is UPF0193 protein EVG1 (C22orf23) (Homo sapiens (Human)).